A 276-amino-acid chain; its full sequence is MSKAKSPIKSSKKSVNQPKSVLREKKVKDAEKAEHISLQGHVDNSDEEGQDKEFFPGFGSSDDDEEDSPNALVNTSRQIMDLGEDAEKTIKKKVSENKNLQKKKGVLYVGRLPHGFYEKQMRMYFSQFGPVLRLRMSRNRKTGSSKHYAFIEFESLDVANVVAETMHNYLLYGKLLQCKVIPEDQVHENMFKGADVPFKRIPHATIARLQHEKPLSKEKADKLITRHNRKLKLKKRKLKELGITLESDVSHPKAASPVASKKSSKKKNKKVLAAHK.

Residues 1 to 70 (MSKAKSPIKS…SDDDEEDSPN (70 aa)) are disordered. Residues 21 to 35 (VLREKKVKDAEKAEH) are compositionally biased toward basic and acidic residues. Residues 105–183 (GVLYVGRLPH…KLLQCKVIPE (79 aa)) enclose the RRM domain. The disordered stretch occupies residues 249–276 (VSHPKAASPVASKKSSKKKNKKVLAAHK). Over residues 252–261 (PKAASPVASK) the composition is skewed to low complexity. A compositionally biased stretch (basic residues) spans 262–276 (KSSKKKNKKVLAAHK).

Its subcellular location is the nucleus. It is found in the nucleolus. This is an uncharacterized protein from Schizosaccharomyces pombe (strain 972 / ATCC 24843) (Fission yeast).